The following is a 293-amino-acid chain: 3-hydroxybutyryl-CoA dehydrogenase (293 aa).

The protein belongs to the 3-hydroxyacyl-CoA dehydrogenase family.

It catalyses the reaction (3S)-3-hydroxybutanoyl-CoA + NADP(+) = acetoacetyl-CoA + NADPH + H(+). The protein operates within lipid metabolism; butanoate metabolism. In Bradyrhizobium diazoefficiens (strain JCM 10833 / BCRC 13528 / IAM 13628 / NBRC 14792 / USDA 110), this protein is 3-hydroxybutyryl-CoA dehydrogenase (hbdA).